Consider the following 522-residue polypeptide: DNA damage-binding protein cmr1 (522 aa).

Positions 34–47 (VFTPTLPNRATGSQ) are enriched in polar residues. Disordered regions lie at residues 34–89 (VFTP…KRKA) and 217–239 (QEKP…DPVL). Basic residues predominate over residues 49–59 (KTKKKPAPKKV). One copy of the WD 1 repeat lies at 182–223 (LTPERVYTMTFHPSETKPLIFAGDKMGHLGILDASQEKPTSV). A compositionally biased stretch (acidic residues) spans 226-236 (EDEDEEDDDPD). 6 WD repeats span residues 244 to 284 (PHTR…SVER), 294 to 331 (VPLS…QGSV), 336 to 376 (LSEK…RREP), 381 to 422 (EHQS…ASWK), 445 to 488 (GRWV…LAQL), and 491 to 522 (DGIT…CLWM).

It belongs to the WD repeat DDB2/WDR76 family.

Its function is as follows. DNA-binding protein that binds to both single- and double-stranded DNA. Binds preferentially to UV-damaged DNA. May be involved in DNA-metabolic processes. The polypeptide is DNA damage-binding protein cmr1 (Aspergillus oryzae (strain ATCC 42149 / RIB 40) (Yellow koji mold)).